We begin with the raw amino-acid sequence, 37 residues long: Photosystem II reaction center protein M (37 aa).

A helical membrane pass occupies residues 7–27 (AFIAVLLFLAVPTAFLLIPYV).

The protein belongs to the PsbM family. As to quaternary structure, PSII is composed of 1 copy each of membrane proteins PsbA, PsbB, PsbC, PsbD, PsbE, PsbF, PsbH, PsbI, PsbJ, PsbK, PsbL, PsbM, PsbT, PsbX, PsbY, PsbZ, Psb30/Ycf12, at least 3 peripheral proteins of the oxygen-evolving complex and a large number of cofactors. It forms dimeric complexes.

It is found in the plastid. It localises to the chloroplast thylakoid membrane. One of the components of the core complex of photosystem II (PSII). PSII is a light-driven water:plastoquinone oxidoreductase that uses light energy to abstract electrons from H(2)O, generating O(2) and a proton gradient subsequently used for ATP formation. It consists of a core antenna complex that captures photons, and an electron transfer chain that converts photonic excitation into a charge separation. This subunit is found at the monomer-monomer interface. This Pinus thunbergii (Japanese black pine) protein is Photosystem II reaction center protein M.